Consider the following 42-residue polypeptide: DRDSCVDKSRCAKYGHYQECTDCCKKYGHNGGTCMFFKCKCA.

Intrachain disulfides connect cysteine 5–cysteine 23, cysteine 11–cysteine 34, cysteine 20–cysteine 39, and cysteine 24–cysteine 41.

Belongs to the ergtoxin family. Gamma-KTx 1 subfamily. As to expression, expressed by the venom gland.

Its subcellular location is the secreted. Blocks Kv11/ERG potassium channels. This Centruroides gracilis (Slenderbrown scorpion) protein is Potassium channel toxin gamma-KTx 1.3.